The chain runs to 173 residues: Crossover junction endodeoxyribonuclease RuvC (173 aa).

Catalysis depends on residues Asp8, Glu67, and Asp139. Residues Asp8, Glu67, and Asp139 each contribute to the Mg(2+) site.

Belongs to the RuvC family. As to quaternary structure, homodimer which binds Holliday junction (HJ) DNA. The HJ becomes 2-fold symmetrical on binding to RuvC with unstacked arms; it has a different conformation from HJ DNA in complex with RuvA. In the full resolvosome a probable DNA-RuvA(4)-RuvB(12)-RuvC(2) complex forms which resolves the HJ. Mg(2+) serves as cofactor.

The protein localises to the cytoplasm. The enzyme catalyses Endonucleolytic cleavage at a junction such as a reciprocal single-stranded crossover between two homologous DNA duplexes (Holliday junction).. In terms of biological role, the RuvA-RuvB-RuvC complex processes Holliday junction (HJ) DNA during genetic recombination and DNA repair. Endonuclease that resolves HJ intermediates. Cleaves cruciform DNA by making single-stranded nicks across the HJ at symmetrical positions within the homologous arms, yielding a 5'-phosphate and a 3'-hydroxyl group; requires a central core of homology in the junction. The consensus cleavage sequence is 5'-(A/T)TT(C/G)-3'. Cleavage occurs on the 3'-side of the TT dinucleotide at the point of strand exchange. HJ branch migration catalyzed by RuvA-RuvB allows RuvC to scan DNA until it finds its consensus sequence, where it cleaves and resolves the cruciform DNA. The polypeptide is Crossover junction endodeoxyribonuclease RuvC (Baumannia cicadellinicola subsp. Homalodisca coagulata).